The chain runs to 146 residues: Gonadotropin subunit beta-2 (146 aa).

The N-terminal stretch at 1–28 is a signal peptide; the sequence is TGTPVKILVVRNILLLLFCLVVLLVFAQ. Disulfide bonds link cysteine 35–cysteine 83, cysteine 49–cysteine 98, cysteine 52–cysteine 136, cysteine 60–cysteine 114, cysteine 64–cysteine 116, and cysteine 119–cysteine 126. Asparagine 39 carries N-linked (GlcNAc...) asparagine glycosylation.

Belongs to the glycoprotein hormones subunit beta family. In terms of assembly, heterodimer of an alpha and a beta chain.

It localises to the secreted. Functionally, involved in gametogenesis and steroidogenesis. The polypeptide is Gonadotropin subunit beta-2 (cgbb) (Ctenopharyngodon idella (Grass carp)).